Here is a 121-residue protein sequence, read N- to C-terminus: Large ribosomal subunit protein uL18 (121 aa).

The protein belongs to the universal ribosomal protein uL18 family. In terms of assembly, part of the 50S ribosomal subunit; part of the 5S rRNA/L5/L18/L25 subcomplex. Contacts the 5S and 23S rRNAs.

Its function is as follows. This is one of the proteins that bind and probably mediate the attachment of the 5S RNA into the large ribosomal subunit, where it forms part of the central protuberance. This is Large ribosomal subunit protein uL18 from Burkholderia ambifaria (strain MC40-6).